Consider the following 60-residue polypeptide: Three-finger toxin MS3 (60 aa).

4 cysteine pairs are disulfide-bonded: Cys3/Cys22, Cys15/Cys39, Cys41/Cys52, and Cys53/Cys58.

The protein belongs to the three-finger toxin family. Short-chain subfamily. Type I alpha-neurotoxin sub-subfamily. In terms of tissue distribution, expressed by the venom gland.

It localises to the secreted. Functionally, produces peripheral paralysis by blocking neuromuscular transmission at the postsynaptic site. Binds to and inhibits the endogenous nicotinic acetylcholine receptors (nAChR) in human rhabdomyosarcoma TE 671 cell line with an IC(50) of 346 mM. This neurotoxin is lethal to mice by intraperitoneal injection and to zebrafish by injection at the back of the dorsolateral region. The polypeptide is Three-finger toxin MS3 (Micrurus surinamensis (Surinam coral snake)).